The primary structure comprises 108 residues: Translation initiation factor 1A (108 aa).

The region spanning 11 to 85 (PSRDVPRPEE…NRCDILYKYG (75 aa)) is the S1-like domain.

It belongs to the eIF-1A family.

Its function is as follows. Seems to be required for maximal rate of protein biosynthesis. Enhances ribosome dissociation into subunits and stabilizes the binding of the initiator Met-tRNA(I) to 40 S ribosomal subunits. This is Translation initiation factor 1A (eIF1A) from Saccharolobus solfataricus (strain ATCC 35092 / DSM 1617 / JCM 11322 / P2) (Sulfolobus solfataricus).